Reading from the N-terminus, the 405-residue chain is S-adenosylmethionine synthase (405 aa).

139–144 provides a ligand contact to ATP; sequence GKGSAD.

The protein belongs to the AdoMet synthase 2 family. It depends on Mg(2+) as a cofactor.

It catalyses the reaction L-methionine + ATP + H2O = S-adenosyl-L-methionine + phosphate + diphosphate. Its pathway is amino-acid biosynthesis; S-adenosyl-L-methionine biosynthesis; S-adenosyl-L-methionine from L-methionine: step 1/1. Catalyzes the formation of S-adenosylmethionine from methionine and ATP. In Sulfurisphaera tokodaii (strain DSM 16993 / JCM 10545 / NBRC 100140 / 7) (Sulfolobus tokodaii), this protein is S-adenosylmethionine synthase.